A 364-amino-acid chain; its full sequence is Autophagy-related protein 5 (364 aa).

Positions 1-13 are enriched in polar residues; sequence MASPNPYSYSPQL. The disordered stretch occupies residues 1–103; it reads MASPNPYSYS…SLPPKPKPSS (103 aa). The segment covering 28 to 42 has biased composition (low complexity); it reads SSPSFRSTPFRSSRG. Residues 43-53 are compositionally biased toward gly residues; sequence TGAGTGIGLGL. Over residues 72 to 82 the composition is skewed to basic and acidic residues; it reads RSGDGSHDDLP. Lys202 is covalently cross-linked (Glycyl lysine isopeptide (Lys-Gly) (interchain with G-Cter in ATG12)). Residues 262–306 are disordered; that stretch reads PSSPSPPSSDQQQPQRPGGSSSSGSYRVMQTLVPPRGPNNRTPQT. Residues 269–286 show a composition bias toward low complexity; it reads SSDQQQPQRPGGSSSSGS.

The protein belongs to the ATG5 family. As to quaternary structure, conjugated with atg12. Conjugated to atg12; which is essential for autophagy.

It localises to the preautophagosomal structure membrane. Its function is as follows. Involved in cytoplasm to vacuole transport (Cvt) and autophagic vesicle formation. Autophagy is essential for maintenance of amino acid levels and protein synthesis under nitrogen starvation. Required for selective autophagic degradation of the nucleus (nucleophagy). Also required for mitophagy, which eliminates defective or superfluous mitochondria in order to fulfill cellular energy requirements and prevent excess ROS production. Conjugation with atg12, through a ubiquitin-like conjugating system involving apg-5/atg7 as an E1-like activating enzyme and atg10 as an E2-like conjugating enzyme, is essential for its function. The atg12-apg-4/atg5 conjugate acts as an E3-like enzyme which is required for lipidation of apg-6/atg8 and apg-6/atg8 association to the vesicle membranes. The sequence is that of Autophagy-related protein 5 (apg-4) from Neurospora crassa (strain ATCC 24698 / 74-OR23-1A / CBS 708.71 / DSM 1257 / FGSC 987).